A 179-amino-acid chain; its full sequence is Repressor of phase 1 flagellin gene (179 aa).

Functionally, transcriptional repressor of the FliC phase-1 flagellin. The sequence is that of Repressor of phase 1 flagellin gene (fljA) from Salmonella abortus-equi.